We begin with the raw amino-acid sequence, 165 residues long: MGCCGCSEGCGSGCGGCGSGCGGCGSGCGGCGSSCCVPVCCCKPVCCCVPACSCSSCGSCGGSKGGCGSCGGSKGGCGSCGGSKGGCGSCGCSQCSCYKPCCCSSGCGSSCCQSSCCKPCCCQSSCCKPCCCSSGCGSSCCQSSCCNPCCSQSSCCVPVCCQCKI.

A run of 7 repeats spans residues 35 to 38 (CCVP), 41 to 44 (CCKP), 47 to 50 (CCVP), 116 to 119 (CCKP), 126 to 129 (CCKP), 145 to 148 (CCNP), and 155 to 158 (CCVP). A 7 X 4 AA repeats of C-C-X-P region spans residues 35–158 (CCVPVCCCKP…CCSQSSCCVP (124 aa)).

It belongs to the KRTAP type 5 family. As to quaternary structure, interacts with hair keratins. Expressed in hair root but not in skin.

Its function is as follows. In the hair cortex, hair keratin intermediate filaments are embedded in an interfilamentous matrix, consisting of hair keratin-associated protein (KRTAP), which are essential for the formation of a rigid and resistant hair shaft through their extensive disulfide bond cross-linking with abundant cysteine residues of hair keratins. The matrix proteins include the high-sulfur and high-glycine-tyrosine keratins. The chain is Keratin-associated protein 5-7 (KRTAP5-7) from Homo sapiens (Human).